The sequence spans 541 residues: Membrane protein insertase YidC (541 aa).

A run of 5 helical transmembrane segments spans residues 7-27, 345-365, 415-435, 453-473, and 492-512; these read LLFM…QVDY, LVQN…AILY, LGGC…YWTF, LSAQ…MFLL, and FMPL…VLYW.

Belongs to the OXA1/ALB3/YidC family. Type 1 subfamily. In terms of assembly, interacts with the Sec translocase complex via SecD. Specifically interacts with transmembrane segments of nascent integral membrane proteins during membrane integration.

It localises to the cell inner membrane. Functionally, required for the insertion and/or proper folding and/or complex formation of integral membrane proteins into the membrane. Involved in integration of membrane proteins that insert both dependently and independently of the Sec translocase complex, as well as at least some lipoproteins. Aids folding of multispanning membrane proteins. This chain is Membrane protein insertase YidC, found in Histophilus somni (strain 129Pt) (Haemophilus somnus).